Here is a 526-residue protein sequence, read N- to C-terminus: Peptide chain release factor 3 (526 aa).

One can recognise a tr-type G domain in the interval 8–277; it reads NKRRTFAIIS…GLTEWAPKPQ (270 aa). Residues 17-24, 85-89, and 139-142 contribute to the GTP site; these read SHPDAGKT, DTPGH, and NKLD.

It belongs to the TRAFAC class translation factor GTPase superfamily. Classic translation factor GTPase family. PrfC subfamily.

Its subcellular location is the cytoplasm. Increases the formation of ribosomal termination complexes and stimulates activities of RF-1 and RF-2. It binds guanine nucleotides and has strong preference for UGA stop codons. It may interact directly with the ribosome. The stimulation of RF-1 and RF-2 is significantly reduced by GTP and GDP, but not by GMP. This Actinobacillus pleuropneumoniae serotype 5b (strain L20) protein is Peptide chain release factor 3.